Here is a 195-residue protein sequence, read N- to C-terminus: Imidazoleglycerol-phosphate dehydratase (195 aa).

The protein belongs to the imidazoleglycerol-phosphate dehydratase family.

Its subcellular location is the cytoplasm. It catalyses the reaction D-erythro-1-(imidazol-4-yl)glycerol 3-phosphate = 3-(imidazol-4-yl)-2-oxopropyl phosphate + H2O. The protein operates within amino-acid biosynthesis; L-histidine biosynthesis; L-histidine from 5-phospho-alpha-D-ribose 1-diphosphate: step 6/9. This is Imidazoleglycerol-phosphate dehydratase from Hydrogenovibrio crunogenus (strain DSM 25203 / XCL-2) (Thiomicrospira crunogena).